A 60-amino-acid chain; its full sequence is Ixodegrin YY-39 (60 aa).

Positions 1–21 (MNAALIAALLILGALTLDATA) are cleaved as a signal peptide. Positions 49-51 (RGD) match the Cell attachment site motif.

The protein belongs to the ixodegrin family. Contains 3 disulfide bonds. In terms of tissue distribution, expressed in salivary glands.

It is found in the secreted. Its function is as follows. Tick salivary platelet aggregation inhibitor that plays an important part in the anti-hemostatic strategy of ticks. Inhibits platelet aggregation induced by ADP, thrombin and thromboxane A2 (TXA2). Blocks platelet adhesion to soluble collagen (most probably through the binding to alpha-2/beta-1 integrin (ITGA2/ITGB1)) and binds to purified glycoprotein IIb/IIIa (ITGA2B/ITGB3) in a dose-dependent manner. In vivo, reduces thrombus weight effectively in a rat arteriovenous shunt model and inhibits thrombosis in a carrageenan-induced mouse tail thrombosis model. The sequence is that of Ixodegrin YY-39 from Ixodes scapularis (Black-legged tick).